The primary structure comprises 149 residues: Large ribosomal subunit protein uL13 (149 aa).

The protein belongs to the universal ribosomal protein uL13 family. Part of the 50S ribosomal subunit.

In terms of biological role, this protein is one of the early assembly proteins of the 50S ribosomal subunit, although it is not seen to bind rRNA by itself. It is important during the early stages of 50S assembly. In Thermobifida fusca (strain YX), this protein is Large ribosomal subunit protein uL13.